The following is a 347-amino-acid chain: Tetraacyldisaccharide 4'-kinase (347 aa).

Position 64–71 (64–71 (YVGGTGKT)) interacts with ATP.

The protein belongs to the LpxK family.

It catalyses the reaction a lipid A disaccharide + ATP = a lipid IVA + ADP + H(+). Its pathway is glycolipid biosynthesis; lipid IV(A) biosynthesis; lipid IV(A) from (3R)-3-hydroxytetradecanoyl-[acyl-carrier-protein] and UDP-N-acetyl-alpha-D-glucosamine: step 6/6. Functionally, transfers the gamma-phosphate of ATP to the 4'-position of a tetraacyldisaccharide 1-phosphate intermediate (termed DS-1-P) to form tetraacyldisaccharide 1,4'-bis-phosphate (lipid IVA). This is Tetraacyldisaccharide 4'-kinase from Bordetella bronchiseptica (strain ATCC BAA-588 / NCTC 13252 / RB50) (Alcaligenes bronchisepticus).